The sequence spans 452 residues: Mitochondrial distribution and morphology protein 10 (452 aa).

The protein belongs to the MDM10 family. As to quaternary structure, component of the ER-mitochondria encounter structure (ERMES) or MDM complex, composed of MMM1, MDM10, MDM12 and MDM34. Associates with the mitochondrial outer membrane sorting assembly machinery SAM(core) complex.

Its subcellular location is the mitochondrion outer membrane. Functionally, component of the ERMES/MDM complex, which serves as a molecular tether to connect the endoplasmic reticulum and mitochondria. Components of this complex are involved in the control of mitochondrial shape and protein biogenesis and may function in phospholipid exchange. MDM10 is involved in the late assembly steps of the general translocase of the mitochondrial outer membrane (TOM complex). Functions in the TOM40-specific route of the assembly of outer membrane beta-barrel proteins, including the association of TOM40 with the receptor TOM22 and small TOM proteins. Can associate with the SAM(core) complex as well as the MDM12-MMM1 complex, both involved in late steps of the major beta-barrel assembly pathway, that is responsible for biogenesis of all outer membrane beta-barrel proteins. May act as a switch that shuttles between both complexes and channels precursor proteins into the TOM40-specific pathway. Plays a role in mitochondrial morphology and in the inheritance of mitochondria. The polypeptide is Mitochondrial distribution and morphology protein 10 (Kluyveromyces lactis (strain ATCC 8585 / CBS 2359 / DSM 70799 / NBRC 1267 / NRRL Y-1140 / WM37) (Yeast)).